Here is an 86-residue protein sequence, read N- to C-terminus: Chymotrypsin inhibitor (86 aa).

Positions 1-16 (MKTLCIFLVLVVAVAA) are cleaved as a signal peptide. 4 disulfides stabilise this stretch: Cys-26/Cys-58, Cys-38/Cys-50, Cys-42/Cys-82, and Cys-60/Cys-76. In terms of domain architecture, TIL spans 26-82 (CPPNKEFGSYGDCPPSCLKNPPNFCTLKLNYGCKCKEGYVLTRYQDYESDCIKPEEC).

The protein belongs to the serine protease inhibitor-like (TIL domain-containing) family. In terms of tissue distribution, only expressed in fat body.

It localises to the secreted. Its function is as follows. Serine protease inhibitor that inhibits chymotrypsin (IC(50)=34.13 nM, Ki=49.85 nM), microbial serine proteases (subtilisin A (IC(50)=21.31 nM, Ki=20.51 nM) and proteinase K (IC(50)=52.56 nM, Ki=65.42 nM)), as well as human neutrophil elastase (IC(50)=11.54 nM, Ki=8.74 nM), and porcine pancreatic elastase (IC(50)=19.07 nM, Ki=11.32 nM). This is Chymotrypsin inhibitor from Araneus ventricosus (Orbweaver spider).